Consider the following 369-residue polypeptide: MDQDALISKEDSEVEREASGGRESLSDVIGFLDAVLSSEPTDIGGDRSWLHNTINTLQRPGSTHRVKGEGEGEVSTSSTQDNRSGEESRVSGGTSEPEAEAHARNVDKQNIHWATGRGASTDSVPQDLGNGRDSGILEDPPNEGGYPRSGAEDENREMAANPDKRGEDQAEGLPEEIRRSAPLPDEREGRADNNGRGVEPGSPHSARVTGVLVIPSPELEEAVLQRNKRRPANSGSRSLTPVVVPSTRSPPPDHDNSTRSPPRKPPTTQDEHTNPRNTPAVRIKDRRPPTGTRSAPDRPTDGYPTHPSPETDATKKGHRREHIIYERDGYIVNESWCNPVCSRIRVVPRRELCVCKACPKICKLCRDGI.

Disordered stretches follow at residues 1–23 and 54–320; these read MDQD…GGRE and INTL…GHRR. Composition is skewed to basic and acidic residues over residues 7–20, 99–110, 150–168, and 175–193; these read ISKE…EASG, AEAHARNVDKQN, GAED…RGED, and EEIR…RADN. Phosphoserine; by host occurs at positions 249, 257, and 260. Zn(2+)-binding residues include His-318, Cys-337, Cys-341, Cys-353, Cys-355, Cys-358, Cys-362, and Cys-365.

This sequence belongs to the paramyxoviruses V protein family. Interacts with host IFIH1/MDA5 and DHX58/LGP2. Interacts with host IRF3. Interacts with host RIGI regulatory protein (via CARDs domain) and host TRIM25 (via SPRY domain); these interactions prevent TRIM25-mediated ubiquitination of RIG-I and disrupts downstream RIG-I signaling.

It localises to the host cytoplasm. Plays an essential role in the inhibition of host immune response. Prevents the establishment of cellular antiviral state by blocking interferon-alpha/beta (IFN-alpha/beta) production and signaling pathway. Interacts with host IFIH1/MDA5 and DHX58/LGP2 to inhibit the transduction pathway involved in the activation of IFN-beta promoter, thus protecting the virus against cell antiviral state. Also interacts with and inhibits host IRF3. Blocks the type I interferon signaling pathway by disrupting the RIG-I signaling pathway. In Cavia cutleri (Guinea pig), this protein is Protein V (P/V/C).